Here is a 517-residue protein sequence, read N- to C-terminus: Cobyric acid synthase (517 aa).

Residues 253–453 (EVEIAVIKLP…IHGILDNDSL (201 aa)) enclose the GATase cobBQ-type domain. Cys334 (nucleophile) is an active-site residue. His445 is an active-site residue.

It belongs to the CobB/CobQ family. CobQ subfamily.

The protein operates within cofactor biosynthesis; adenosylcobalamin biosynthesis. Catalyzes amidations at positions B, D, E, and G on adenosylcobyrinic A,C-diamide. NH(2) groups are provided by glutamine, and one molecule of ATP is hydrogenolyzed for each amidation. The sequence is that of Cobyric acid synthase from Moorella thermoacetica (strain ATCC 39073 / JCM 9320).